The chain runs to 491 residues: Chromosomal replication initiator protein DnaA (491 aa).

Residues 1–69 are domain I, interacts with DnaA modulators; it reads MTTWNKCLKK…TIQEFHDGDL (69 aa). Residues 69–154 form a domain II region; the sequence is LLIEYSNKKF…KDDQEYSFGL (86 aa). The tract at residues 106-126 is disordered; the sequence is DSEETSLNQEPKKSQKKLSSK. Residues 155 to 371 are domain III, AAA+ region; sequence PLKEKYVFDS…GALNRVLTTS (217 aa). Positions 199, 201, 202, and 203 each coordinate ATP. The domain IV, binds dsDNA stretch occupies residues 372 to 491; the sequence is KFNHKDPTIE…YELLLDKISR (120 aa).

Belongs to the DnaA family. As to quaternary structure, oligomerizes as a right-handed, spiral filament on DNA at oriC.

It localises to the cytoplasm. Its function is as follows. Plays an essential role in the initiation and regulation of chromosomal replication. ATP-DnaA binds to the origin of replication (oriC) to initiate formation of the DNA replication initiation complex once per cell cycle. Binds the DnaA box (a 9 base pair repeat at the origin) and separates the double-stranded (ds)DNA. Forms a right-handed helical filament on oriC DNA; dsDNA binds to the exterior of the filament while single-stranded (ss)DNA is stabiized in the filament's interior. The ATP-DnaA-oriC complex binds and stabilizes one strand of the AT-rich DNA unwinding element (DUE), permitting loading of DNA polymerase. After initiation quickly degrades to an ADP-DnaA complex that is not apt for DNA replication. Binds acidic phospholipids. The chain is Chromosomal replication initiator protein DnaA from Francisella philomiragia subsp. philomiragia (strain ATCC 25017 / CCUG 19701 / FSC 153 / O#319-036).